A 1081-amino-acid chain; its full sequence is Disheveled-associated activator of morphogenesis 1-A (1081 aa).

The region spanning 45–418 is the GBD/FH3 domain; that stretch reads LPVPPVEELD…QIVIQNEKGQ (374 aa). Disordered stretches follow at residues 455-476 and 519-615; these read KEHNELQQKLEKKERECDAKTQ and RTVC…PLKS. Positions 526 to 536 are enriched in pro residues; it reads PGGPPPPPGAP. Low complexity predominate over residues 538-547; it reads GPMSMPSGNF. Residues 548 to 585 show a composition bias toward pro residues; sequence MPPPPPPPPPFPGGMAPPPPPPPPPPPPPGGPPPPPGL. Low complexity predominate over residues 586–600; the sequence is PLLGAAPPGAPLGLS. The region spanning 603-1012 is the FH2 domain; that stretch reads KKNIPQPKNP…EERRIRMEAQ (410 aa). The interval 696-705 is actin-binding; it reads AQNCNILLSR. Residues 1013–1029 show a composition bias toward basic and acidic residues; it reads LKEQRERERKARKAKEN. 2 disordered regions span residues 1013–1038 and 1060–1081; these read LKEQRERERKARKAKENGEEEGEFDD and RKRIVSQTTESSRERPVTKLNY. In terms of domain architecture, DAD spans 1030–1061; sequence GEEEGEFDDLVSALRSGEVFDKDLSKLKRNRK. Over residues 1070-1081 the composition is skewed to basic and acidic residues; sequence SSRERPVTKLNY.

It is found in the cytoplasm. It localises to the cytoskeleton. The protein localises to the cilium basal body. Its function is as follows. Binds to disheveled (dsh) and Rho, and mediates Wnt-induced dsh-Rho complex formation during gastrulation. May play a role as a scaffolding protein to recruit Rho-GDP and Rho-GEF, thereby enhancing Rho-GTP formation. Can direct nucleation and elongation of new actin filaments. Involved in building functional cilia. Involved in building functional cilia. Involved in the organization of the subapical actin network in multiciliated epithelial cells. This chain is Disheveled-associated activator of morphogenesis 1-A (daam1-a), found in Xenopus laevis (African clawed frog).